A 363-amino-acid polypeptide reads, in one-letter code: 3-dehydroquinate synthase (363 aa).

Residues 72–77 (SGEKEK), 130–131 (TT), Lys142, and Lys151 each bind NAD(+). Zn(2+)-binding residues include Glu184, His247, and His264.

This sequence belongs to the sugar phosphate cyclases superfamily. Dehydroquinate synthase family. Co(2+) serves as cofactor. It depends on Zn(2+) as a cofactor. NAD(+) is required as a cofactor.

The protein localises to the cytoplasm. It catalyses the reaction 7-phospho-2-dehydro-3-deoxy-D-arabino-heptonate = 3-dehydroquinate + phosphate. It participates in metabolic intermediate biosynthesis; chorismate biosynthesis; chorismate from D-erythrose 4-phosphate and phosphoenolpyruvate: step 2/7. In terms of biological role, catalyzes the conversion of 3-deoxy-D-arabino-heptulosonate 7-phosphate (DAHP) to dehydroquinate (DHQ). This chain is 3-dehydroquinate synthase, found in Bacillus anthracis (strain A0248).